Here is a 431-residue protein sequence, read N- to C-terminus: tRNA(Ile)-lysidine synthase (431 aa).

Ser-25–Ser-30 is a binding site for ATP.

The protein belongs to the tRNA(Ile)-lysidine synthase family.

It is found in the cytoplasm. The enzyme catalyses cytidine(34) in tRNA(Ile2) + L-lysine + ATP = lysidine(34) in tRNA(Ile2) + AMP + diphosphate + H(+). Its function is as follows. Ligates lysine onto the cytidine present at position 34 of the AUA codon-specific tRNA(Ile) that contains the anticodon CAU, in an ATP-dependent manner. Cytidine is converted to lysidine, thus changing the amino acid specificity of the tRNA from methionine to isoleucine. The sequence is that of tRNA(Ile)-lysidine synthase from Lactobacillus gasseri (strain ATCC 33323 / DSM 20243 / BCRC 14619 / CIP 102991 / JCM 1131 / KCTC 3163 / NCIMB 11718 / NCTC 13722 / AM63).